We begin with the raw amino-acid sequence, 408 residues long: E3 ubiquitin-protein ligase At1g12760 (408 aa).

The disordered stretch occupies residues 1–52 (MSTETTTGNSSLIPASSSSSSSDAIDPAPLLFNGDDNEGNNGGGGGERRSVR). Residues 10-34 (SSLIPASSSSSSSDAIDPAPLLFNG) are compositionally biased toward low complexity. 2 helical membrane passes run 100–120 (VVVL…AILV) and 133–153 (VWLL…CVEY). The disordered stretch occupies residues 160-195 (RTNRTTTTTPPRSRSSSSSSSSSSLEEEALGSRRNS). A compositionally biased stretch (low complexity) spans 163-183 (RTTTTTPPRSRSSSSSSSSSS). 3 helical membrane passes run 219-239 (ANTM…SAGG), 254-274 (IVFL…ACVI), and 275-295 (GIAV…VADQ). The RING-type; atypical zinc-finger motif lies at 353–394 (CCICLSAYEDGTELRELPCGHHFHCSCVDKWLYINATCPLCK).

It is found in the membrane. The enzyme catalyses S-ubiquitinyl-[E2 ubiquitin-conjugating enzyme]-L-cysteine + [acceptor protein]-L-lysine = [E2 ubiquitin-conjugating enzyme]-L-cysteine + N(6)-ubiquitinyl-[acceptor protein]-L-lysine.. It functions in the pathway protein modification; protein ubiquitination. Mediates E2-dependent protein ubiquitination in vitro. In Arabidopsis thaliana (Mouse-ear cress), this protein is E3 ubiquitin-protein ligase At1g12760.